We begin with the raw amino-acid sequence, 467 residues long: Probable apyrase 2 (467 aa).

The Cytoplasmic segment spans residues 1–25 (MRRYSALPGGGARPDTLADRLHRYR). A helical; Signal-anchor for type II membrane protein transmembrane segment spans residues 26–46 (GVLLVILAPLALVSLVLLLMP). At 47 to 467 (RSPASSSAAA…PLGSAIEVAS (421 aa)) the chain is on the extracellular side. 70–80 (VIFDAGSSGSR) contacts ATP. Glu-192 acts as the Proton acceptor in catalysis. 216–226 (GVVDLGGGSVQ) serves as a coordination point for ATP.

It belongs to the GDA1/CD39 NTPase family. It depends on Ca(2+) as a cofactor.

The protein resides in the membrane. The enzyme catalyses a ribonucleoside 5'-triphosphate + 2 H2O = a ribonucleoside 5'-phosphate + 2 phosphate + 2 H(+). Catalyzes the hydrolysis of phosphoanhydride bonds of nucleoside tri- and di-phosphates. The protein is Probable apyrase 2 (APY2) of Oryza sativa subsp. japonica (Rice).